Here is a 102-residue protein sequence, read N- to C-terminus: Defensin (102 aa).

The first 25 residues, 1–25 (MKCATIVCTIAVVLAATLLNGSVQA), serve as a signal peptide directing secretion. The propeptide occupies 26-62 (APQEEAALSGGANLNTLLDELPEETHHAALENYRAKR). 3 disulfides stabilise this stretch: Cys65–Cys92, Cys78–Cys98, and Cys82–Cys100.

The protein belongs to the invertebrate defensin family. Type 1 subfamily.

Its subcellular location is the secreted. Responsible for the anti Gram-positive activity of immune hemolymph. In Anopheles gambiae (African malaria mosquito), this protein is Defensin (Def1).